The following is a 202-amino-acid chain: Protein phosphatase inhibitor 2 family member C (202 aa).

Disordered regions lie at residues 1 to 51 and 71 to 118; these read MSAS…DESS and PGTS…EQES. The interval 12-17 is required for binding PPP1CC; that stretch reads KGILKN. A compositionally biased stretch (low complexity) spans 19-35; the sequence is SSSGSSVATSGQQSGGT. A required for binding PPP1CC region spans residues 43-55; it reads KSQKWDESSILAA. Residues 71–80 are compositionally biased toward polar residues; that stretch reads PGTSYMSVQD. Basic and acidic residues predominate over residues 84–112; that stretch reads DSVRDVEGEDSVRGVEGKEATDASDHSCE. A required for binding PPP1CC catalytic center, displacing metal ions and inhibition of PPP1CC catalytic activity region spans residues 144-147; it reads HYNE. Positions 162–202 are disordered; that stretch reads LQSEDNENEETPQGTNEEKTAAEESEEAPLTGGLQTQSCDP.

The protein belongs to the protein phosphatase inhibitor 2 family. In terms of tissue distribution, detected in sperm (at protein level).

In terms of biological role, functions as a protein phosphatase inhibitor. It inhibits activity of the catalytic subunit of PP1 and weakly inhibits the activity of myosin-associated phosphates. The sequence is that of Protein phosphatase inhibitor 2 family member C from Homo sapiens (Human).